The following is a 360-amino-acid chain: Protein phosphatase 1 regulatory subunit 7 (360 aa).

A disordered region spans residues 1 to 64; it reads MAAERGAGQQ…GEEDPEEEHE (64 aa). N-acetylalanine is present on Ala2. Residues Ser12, Ser24, Ser27, Ser44, and Ser47 each carry the phosphoserine modification. A compositionally biased stretch (basic and acidic residues) spans 17–34; that stretch reads EVDRRVESEESGDEEGKK. Positions 53–63 are enriched in acidic residues; that stretch reads ERGEEDPEEEH. 11 LRR repeats span residues 77 to 98, 99 to 120, 121 to 142, 143 to 164, 165 to 186, 187 to 208, 209 to 230, 231 to 252, 253 to 274, 275 to 296, and 297 to 318; these read DAED…EVLK, KVKT…EELQ, SLRE…EALT, ELEI…DKLT, RLKK…SNLH, QLQM…DTLT, NLES…DALT, NLTV…QNLV, NLRE…ENNN, KLTM…SHLT, and ELQE…DELK. A Phosphoserine modification is found at Ser322. The 30-residue stretch at 331–360 folds into the LRRCT domain; sequence NPLQKDPQYRRKVMLALPSVRQIDATFVRF.

This sequence belongs to the SDS22 family. In terms of assembly, interacts with PPP1CA, PPP1CB and PPP1CC/PPP1G isoform 1. As to expression, widely expressed.

It localises to the nucleus. Regulatory subunit of protein phosphatase 1. The protein is Protein phosphatase 1 regulatory subunit 7 (PPP1R7) of Homo sapiens (Human).